Reading from the N-terminus, the 416-residue chain is Choline/ethanolaminephosphotransferase 1 (416 aa).

Residues 1–20 (MSGHRSTRKRCGDSHPESPV) form a disordered region. Position 18 is a phosphoserine (S18). T40 carries the phosphothreonine modification. N86 is a CDP-choline binding site. The next 2 helical transmembrane spans lie at 89-108 (TIIG…FYCP) and 116-133 (LWAY…QSLD). Residue D133 coordinates Mg(2+). Residue N144 is glycosylated (N-linked (GlcNAc...) asparagine). E151 contacts CDP-choline. D154 lines the Mg(2+) pocket. H155 acts as the Proton acceptor in catalysis. 8 helical membrane passes run 156 to 176 (GCDS…VQLG), 180 to 199 (DWMF…AHWQ), 210 to 230 (IIDV…AVIG), 246 to 267 (MKIF…NYFR), 286 to 306 (VLSP…IYKK), 315 to 334 (HPCL…TNKL), 349 to 363 (TAFI…DQYF), and 368 to 388 (DEYI…IRYC). D158 is a binding site for Mg(2+).

Belongs to the CDP-alcohol phosphatidyltransferase class-I family. As to quaternary structure, homodimer. It depends on Mg(2+) as a cofactor. Mn(2+) serves as cofactor. In terms of tissue distribution, ubiquitously expressed.

Its subcellular location is the endoplasmic reticulum membrane. It is found in the nucleus membrane. It catalyses the reaction CDP-ethanolamine + a 1,2-diacyl-sn-glycerol = a 1,2-diacyl-sn-glycero-3-phosphoethanolamine + CMP + H(+). It carries out the reaction CDP-choline + a 1,2-diacyl-sn-glycerol = a 1,2-diacyl-sn-glycero-3-phosphocholine + CMP + H(+). The catalysed reaction is 1-O-alkyl-2-acyl-sn-glycerol + CDP-choline = a 1-O-alkyl-2-acyl-sn-glycero-3-phosphocholine + CMP + H(+). The enzyme catalyses a 1-O-(1Z-alkenyl)-2-acyl-sn-glycerol + CDP-choline = a 1-O-(1Z-alkenyl)-2-acyl-sn-glycero-3-phosphocholine + CMP + H(+). It catalyses the reaction 1,2-dioctanoyl-sn-glycerol + CDP-choline = 1,2-dioctanoyl-sn-glycero-3-phosphocholine + CMP + H(+). It carries out the reaction 1,2-didecanoyl-sn-glycerol + CDP-choline = 1,2-didecanoyl-sn-glycero-3-phosphocholine + CMP + H(+). The catalysed reaction is CDP-choline + 1,2-di-(9Z-octadecenoyl)-sn-glycerol = 1,2-di-(9Z-octadecenoyl)-sn-glycero-3-phosphocholine + CMP + H(+). The enzyme catalyses 1-hexadecanoyl-2-(9Z-octadecenoyl)-sn-glycerol + CDP-choline = 1-hexadecanoyl-2-(9Z-octadecenoyl)-sn-glycero-3-phosphocholine + CMP + H(+). It catalyses the reaction CDP-ethanolamine + 1,2-di-(9Z-octadecenoyl)-sn-glycerol = 1,2-di-(9Z-octadecenoyl)-sn-glycero-3-phosphoethanolamine + CMP + H(+). It carries out the reaction 1-hexadecanoyl-2-(9Z-octadecenoyl)-sn-glycerol + CDP-ethanolamine = 1-hexadecanoyl-2-(9Z-octadecenoyl)-sn-glycero-3-phosphoethanolamine + CMP + H(+). The catalysed reaction is 1-hexadecanoyl-2-(4Z,7Z,10Z,13Z,16Z,19Z-docosahexaenoyl)-sn-glycerol + CDP-choline = 1-hexadecanoyl-2-(4Z,7Z,10Z,13Z,16Z,19Z-docosahexaenoyl)-sn-glycero-3-phosphocholine + CMP + H(+). The enzyme catalyses 1,2-di-(9Z-hexadecenoyl)-sn-glycerol + CDP-choline = 1,2-di-(9Z-hexadecenoyl)-sn-glycero-3-phosphocholine + CMP + H(+). It catalyses the reaction 1,2-di-(9Z-hexadecenoyl)-sn-glycerol + CDP-ethanolamine = 1,2-di-(9Z-hexadecenoyl)-sn-glycero-3-phosphoethanolamine + CMP + H(+). It carries out the reaction 1-O-hexadecyl-2-acetyl-sn-glycerol + CDP-choline = 1-O-hexadecyl-2-acetyl-sn-glycero-3-phosphocholine + CMP + H(+). The catalysed reaction is 1-O-hexadecyl-2-(5Z,8Z,11Z,14Z-eicosatetraenoyl)-sn-glycerol + CDP-choline = 1-O-hexadecyl-2-(5Z,8Z,11Z,14Z)-eicosatetraenoyl-sn-glycero-3-phosphocholine + CMP + H(+). It participates in phospholipid metabolism; phosphatidylethanolamine biosynthesis; phosphatidylethanolamine from ethanolamine: step 3/3. Its pathway is phospholipid metabolism; phosphatidylcholine biosynthesis; phosphatidylcholine from phosphocholine: step 2/2. Functionally, catalyzes both phosphatidylcholine and phosphatidylethanolamine biosynthesis from CDP-choline and CDP-ethanolamine, respectively. Involved in protein-dependent process of phospholipid transport to distribute phosphatidyl choline to the lumenal surface. Has a higher cholinephosphotransferase activity than ethanolaminephosphotransferase activity. The chain is Choline/ethanolaminephosphotransferase 1 from Homo sapiens (Human).